A 951-amino-acid chain; its full sequence is Bromodomain-containing protein 8 (951 aa).

The residue at position 85 (Lys85) is an N6-acetyllysine. The stretch at 97–171 (VRKLTAERVE…ATDAAYQARQ (75 aa)) forms a coiled coil. Residues 161–273 (KATDAAYQAR…TPPPSPLLSE (113 aa)) form a disordered region. Positions 204–226 (TPTTMEEATSGVTPGTLPSTPVT) are enriched in polar residues. 2 positions are modified to phosphoserine: Ser456 and Ser460. The tract at residues 520 to 547 (EENDDPQSLPGPWEHPIQQERDKPVPLP) is disordered. Lys542 participates in a covalent cross-link: Glycyl lysine isopeptide (Lys-Gly) (interchain with G-Cter in SUMO2). N6-acetyllysine; alternate is present on Lys554. A Glycyl lysine isopeptide (Lys-Gly) (interchain with G-Cter in SUMO1); alternate cross-link involves residue Lys554. Lys554 participates in a covalent cross-link: Glycyl lysine isopeptide (Lys-Gly) (interchain with G-Cter in SUMO2); alternate. Lys582 is covalently cross-linked (Glycyl lysine isopeptide (Lys-Gly) (interchain with G-Cter in SUMO2)). Positions 584-745 (EPTEPEPGMS…PVSESDDGFS (162 aa)) are disordered. Residues 610 to 622 (PELRSQDSDEEPR) are compositionally biased toward basic and acidic residues. A Glycyl lysine isopeptide (Lys-Gly) (interchain with G-Cter in SUMO2) cross-link involves residue Lys648. Ser652 is modified (phosphoserine). A compositionally biased stretch (basic and acidic residues) spans 673 to 688 (ETQHKFEMSDSLKEES). Lys685 participates in a covalent cross-link: Glycyl lysine isopeptide (Lys-Gly) (interchain with G-Cter in SUMO2). Ser694, Ser710, and Ser714 each carry phosphoserine. A Bromo domain is found at 779 to 884 (IQAQKIWKKA…RDVLEQIQQF (106 aa)). Residues 900-922 (AKSLRGRDSTRKQDASEKDSVPM) form a disordered region. The segment covering 904 to 919 (RGRDSTRKQDASEKDS) has biased composition (basic and acidic residues).

Component of the NuA4 histone acetyltransferase complex which contains the catalytic subunit KAT5/TIP60 and the subunits EP400, TRRAP/PAF400, BRD8/SMAP, EPC1, DMAP1/DNMAP1, RUVBL1/TIP49, RUVBL2, ING3, actin, ACTL6A/BAF53A, MORF4L1/MRG15, MORF4L2/MRGX, MRGBP, YEATS4/GAS41, VPS72/YL1 and MEAF6. Component of a NuA4-related complex which contains EP400, TRRAP/PAF400, SRCAP, BRD8/SMAP, EPC1, DMAP1/DNMAP1, RUVBL1/TIP49, RUVBL2, actin, ACTL6A/BAF53A, VPS72 and YEATS4/GAS41. BRD8 isoform 2 interacts with RXRA/NR2B1 and THRB/ERBA2. Component of a SWR1-like complex.

It localises to the nucleus. Functionally, may act as a coactivator during transcriptional activation by hormone-activated nuclear receptors (NR). Stimulates transcriptional activation by AR/DHTR, ESR1/NR3A1, RXRA/NR2B1 and THRB/ERBA2. Component of the NuA4 histone acetyltransferase (HAT) complex which is involved in transcriptional activation of select genes principally by acetylation of nucleosomal histones H4 and H2A. This modification may both alter nucleosome - DNA interactions and promote interaction of the modified histones with other proteins which positively regulate transcription. This complex may be required for the activation of transcriptional programs associated with oncogene and proto-oncogene mediated growth induction, tumor suppressor mediated growth arrest and replicative senescence, apoptosis, and DNA repair. NuA4 may also play a direct role in DNA repair when recruited to sites of DNA damage. Component of a SWR1-like complex that specifically mediates the removal of histone H2A.Z/H2AZ1 from the nucleosome. This chain is Bromodomain-containing protein 8 (Brd8), found in Mus musculus (Mouse).